The following is a 695-amino-acid chain: Elongation factor G 2 (695 aa).

The 276-residue stretch at 5–280 folds into the tr-type G domain; that stretch reads SKYRNIGIFA…AVVDYLPSPT (276 aa). Residues 14 to 21, 78 to 82, and 132 to 135 contribute to the GTP site; these read AHVDAGKT, DTPGH, and NKLD.

This sequence belongs to the TRAFAC class translation factor GTPase superfamily. Classic translation factor GTPase family. EF-G/EF-2 subfamily.

It localises to the cytoplasm. Catalyzes the GTP-dependent ribosomal translocation step during translation elongation. During this step, the ribosome changes from the pre-translocational (PRE) to the post-translocational (POST) state as the newly formed A-site-bound peptidyl-tRNA and P-site-bound deacylated tRNA move to the P and E sites, respectively. Catalyzes the coordinated movement of the two tRNA molecules, the mRNA and conformational changes in the ribosome. This is Elongation factor G 2 from Vibrio vulnificus (strain YJ016).